We begin with the raw amino-acid sequence, 794 residues long: Ent-kaurene synthase 1, chloroplastic (794 aa).

Residues 1 to 28 constitute a chloroplast transit peptide; it reads MSLLLSNSVLVGPKFRSSRISHASASLD. Mg(2+) is bound by residues D543, D547, N687, and E695. The DDXXD motif signature appears at 543 to 547; sequence DDFFD.

Belongs to the terpene synthase family. Requires Mg(2+) as cofactor. Accumulates in leaves, and, at low levels, in germinating seeds.

The protein resides in the plastid. Its subcellular location is the chloroplast. The catalysed reaction is ent-copalyl diphosphate = ent-kaur-16-ene + diphosphate. It participates in secondary metabolite biosynthesis; terpenoid biosynthesis. It functions in the pathway plant hormone biosynthesis; gibberellin biosynthesis. In terms of biological role, involved in the biosynthesis of ent-kaurene diterpenoids natural products such as oridonin, miltiradiene, eriocalyxin B and nezukol, known to exhibit antitumor, anti-inflammatory and antibacterial activities, and in the production of gibberellins phytohormones. Catalyzes the conversion of ent-copalyl diphosphate (ent-CPP) to ent-kaurene. This chain is Ent-kaurene synthase 1, chloroplastic, found in Isodon eriocalyx (Plectranthus eriocalyx).